The chain runs to 159 residues: Endoribonuclease YbeY (159 aa).

Zn(2+) contacts are provided by histidine 125, histidine 129, and histidine 135.

Belongs to the endoribonuclease YbeY family. Requires Zn(2+) as cofactor.

The protein localises to the cytoplasm. Functionally, single strand-specific metallo-endoribonuclease involved in late-stage 70S ribosome quality control and in maturation of the 3' terminus of the 16S rRNA. The chain is Endoribonuclease YbeY from Limosilactobacillus reuteri (strain DSM 20016) (Lactobacillus reuteri).